A 977-amino-acid polypeptide reads, in one-letter code: Fc receptor-like protein 5 (977 aa).

An N-terminal signal peptide occupies residues 1-15; it reads MLLWVILLVLAPVSG. Residues 16-851 are Extracellular-facing; sequence QFARTPRPII…ANRSGPFATG (836 aa). 8 consecutive Ig-like C2-type domains span residues 23 to 101, 188 to 271, 287 to 374, 380 to 463, 473 to 556, 566 to 651, 659 to 744, and 752 to 834; these read PIIF…LDFS, PFTR…SVIS, PVLT…LSVT, PVLN…KAVS, PVLT…EVVS, PILT…ISLS, PILT…VTLK, and PVLT…ETVT. Cystine bridges form between Cys44–Cys85, Cys211–Cys260, and Cys308–Cys355. Asn383 is a glycosylation site (N-linked (GlcNAc...) asparagine). Intrachain disulfides connect Cys401/Cys448, Cys494/Cys541, Cys587/Cys634, Cys680/Cys727, and Cys773/Cys819. A helical transmembrane segment spans residues 852–872; the sequence is VAGGLLSIAGLAAGALLLYCW. Topologically, residues 873 to 977 are cytoplasmic; sequence LSRKAGRKPA…LFLASSAPHR (105 aa). The interval 879–898 is disordered; the sequence is RKPASDPARSPSDSDSQEPT. The span at 883 to 892 shows a compositional bias: low complexity; the sequence is SDPARSPSDS. Short sequence motifs (ITIM motif) lie at residues 897–902, 910–915, 922–927, and 952–957; these read PTYHNV, PVYTNA, VVYSEV, and IIYSEV.

As to quaternary structure, interacts with CR2. Interacts with CD19. Expressed in marginal zone B-cells, immunoblasts, tonsillar germinal center centrocytes and in the intraepithelial and interfollicular regions of the tonsil. Expressed in many lymphoma cell lines and on hairy cell leukemia cells. Isoform 1, isoform 3, isoform 4 and isoform 5 are detected in lymph node, spleen, bone marrow, and small intestine with preponderance of isoform 3. Expressed in mature and memory B-cells and down-regulated in germinal center cells (at protein level).

It localises to the cell membrane. Its function is as follows. Plays an important role in B-cell response to antigen that acts both as a negative or positive coreceptor. Inhibits B-cell receptor (BCR) signaling in the absence of CR2 stimulation but engagement with CR2 and the BCR lead to a superior calcium response compared to CR2 and BCR costimulation. May be involved in B-cell development and differentiation in peripheral lymphoid organs and may be useful markers of B-cell stages. May have an immunoregulatory role in marginal zone B-cells. May play a role in fertilization. This is Fc receptor-like protein 5 (FCRL5) from Homo sapiens (Human).